Reading from the N-terminus, the 274-residue chain is MEMESFMDDLLNFSVPEEEEDDDEHTQPPRNITRRKTGLRPTDSFGLFNTDDLGVVEEEDLEWISNKNAFPVIETFVGVLPSEHFPITSLLEREATEVKQLSPVSVLETSSHSSTTTTSNSSGGSNGSTAVATTTTTPTIMSCCVGFKAPAKARSKRRRTGRRDLRVLWTGNEQGGIQKKKTMTVAAAALIMGRKCQHCGAEKTPQWRAGPAGPKTLCNACGVRYKSGRLVPEYRPANSPTFTAELHSNSHRKIVEMRKQYQSGDGDGDRKDCG.

Disordered stretches follow at residues 1–39 and 102–132; these read MEME…KTGL and SPVS…TAVA. The short motif at 152–159 is the Nuclear localization signal element; that stretch reads KARSKRRR. The GATA-type zinc finger occupies 190 to 244; sequence LIMGRKCQHCGAEKTPQWRAGPAGPKTLCNACGVRYKSGRLVPEYRPANSPTFTA.

This sequence belongs to the type IV zinc-finger family. Class A subfamily. In terms of tissue distribution, mostly expressed in roots. Also expressed in stems, flowers and leaves.

It is found in the nucleus. Transcriptional activator that specifically binds 5'-GATA-3' or 5'-GAT-3' motifs within gene promoters. May be involved in the regulation of some light-responsive genes. This is GATA transcription factor 1 (GATA1) from Arabidopsis thaliana (Mouse-ear cress).